The chain runs to 130 residues: Probable 15 kDa heat shock protein (130 aa).

The 110-residue stretch at 21–130 (ERVRILAPRV…LTKKIEVRSE (110 aa)) folds into the sHSP domain.

It belongs to the small heat shock protein (HSP20) family.

This chain is Probable 15 kDa heat shock protein (hsp15), found in Leptospira interrogans serogroup Icterohaemorrhagiae serovar Lai (strain 56601).